Reading from the N-terminus, the 345-residue chain is DNA-directed RNA polymerase subunit alpha (345 aa).

The tract at residues 1–241 (MLRDTHLALQ…DQLGMFINFE (241 aa)) is alpha N-terminal domain (alpha-NTD). The tract at residues 257–345 (FNPNLLRKVD…ELVKRSDNPF (89 aa)) is alpha C-terminal domain (alpha-CTD).

Belongs to the RNA polymerase alpha chain family. In terms of assembly, homodimer. The RNAP catalytic core consists of 2 alpha, 1 beta, 1 beta' and 1 omega subunit. When a sigma factor is associated with the core the holoenzyme is formed, which can initiate transcription.

It catalyses the reaction RNA(n) + a ribonucleoside 5'-triphosphate = RNA(n+1) + diphosphate. Functionally, DNA-dependent RNA polymerase catalyzes the transcription of DNA into RNA using the four ribonucleoside triphosphates as substrates. The chain is DNA-directed RNA polymerase subunit alpha from Acidiphilium cryptum (strain JF-5).